Consider the following 335-residue polypeptide: Biotin synthase (335 aa).

One can recognise a Radical SAM core domain in the interval 43-269; sequence YFGKKVKLNM…INPTKEIRIA (227 aa). [4Fe-4S] cluster is bound by residues Cys61, Cys65, and Cys68. Positions 104, 137, 197, and 267 each coordinate [2Fe-2S] cluster.

The protein belongs to the radical SAM superfamily. Biotin synthase family. Homodimer. The cofactor is [4Fe-4S] cluster. [2Fe-2S] cluster is required as a cofactor.

It carries out the reaction (4R,5S)-dethiobiotin + (sulfur carrier)-SH + 2 reduced [2Fe-2S]-[ferredoxin] + 2 S-adenosyl-L-methionine = (sulfur carrier)-H + biotin + 2 5'-deoxyadenosine + 2 L-methionine + 2 oxidized [2Fe-2S]-[ferredoxin]. Its pathway is cofactor biosynthesis; biotin biosynthesis; biotin from 7,8-diaminononanoate: step 2/2. Functionally, catalyzes the conversion of dethiobiotin (DTB) to biotin by the insertion of a sulfur atom into dethiobiotin via a radical-based mechanism. The chain is Biotin synthase from Staphylococcus aureus (strain MSSA476).